The sequence spans 677 residues: Polyunsaturated fatty acid lipoxygenase ALOX8 (677 aa).

The PLAT domain maps to 2-125 (AKCRVRVSTG…ELVLREGAAK (124 aa)). Ca(2+) is bound by residues glycine 15, glycine 17, aspartate 39, histidine 40, glycine 42, glutamate 44, aspartate 86, and alanine 87. The Lipoxygenase domain occupies 126–677 (VSWQDHHPTL…PPLIENSVSI (552 aa)). Residues histidine 374, histidine 379, histidine 554, and isoleucine 677 each coordinate Fe cation.

The protein belongs to the lipoxygenase family. It depends on Fe cation as a cofactor. As to expression, expressed in epidermis and brain. No expression found in heart, spleen, liver, skeletal muscle, kidney or testis.

It is found in the cytoplasm. It localises to the cytosol. The protein resides in the membrane. The enzyme catalyses (9Z,12Z)-octadecadienoate + O2 = (9S)-hydroperoxy-(10E,12Z)-octadecadienoate. It catalyses the reaction (5Z,8Z,11Z,14Z)-eicosatetraenoate + O2 = (8S)-hydroperoxy-(5Z,9E,11Z,14Z)-eicosatetraenoate. The catalysed reaction is (15S)-hydroperoxy-(5Z,8Z,11Z,13E)-eicosatetraenoate + O2 = (8S,15S)-dihydroperoxy-(5Z,9E,11Z,13E)-eicosatetraenoate. It carries out the reaction (8S)-hydroperoxy-(5Z,9E,11Z,14Z)-eicosatetraenoate + O2 = (8S,15S)-dihydroperoxy-(5Z,9E,11Z,13E)-eicosatetraenoate. The enzyme catalyses 1-octadecanoyl-2-(5Z,8Z,11Z,14Z-eicosatetraenoyl)-sn-glycero-3-phosphocholine + O2 = 1-octadecanoyl-2-(15-hydroperoxy-5Z,8Z,11Z,13E-eicosatetraenoyl)-sn-glycero-3-phosphocholine. It catalyses the reaction a 1-acyl-2-(5Z,8Z,11Z,14Z-eicosatetraenoyl)-sn-glycero-3-phospho-(1D-myo-inositol) + O2 = a 1-acyl-2-(15-hydroperoxy-5Z,8Z,11Z,13E-eicosatetraenoyl)-sn-glycero-3-phospho-(1D-myo-inositol). The catalysed reaction is a 1-acyl-2-(8Z,11Z,14Z-eicosatrienoyl)-sn-glycero-3-phospho-(1D-myo-inositol) + O2 = a 1-acyl-2-(15-hydroperoxy-8Z,11Z,13E-eicosatrienoyl)-sn-glycero-3-phospho-(1D-myo-inositol). It carries out the reaction (5Z,8Z,11Z,14Z)-eicosatetraenoate + O2 = 9-hydroperoxy-(5Z,7E,11Z,14Z)-eicosatetraenoate. The enzyme catalyses (5Z,8Z,11Z,14Z)-eicosatetraenoate + O2 = 11-hydroperoxy-(5Z,8Z,12E,14Z)-eicosatetraenoate. It catalyses the reaction (8Z,11Z,14Z)-eicosatrienoate + O2 = 15-hydroperoxy-(8Z,11Z,13E)-eicosatrienoate. It participates in lipid metabolism; hydroperoxy eicosatetraenoic acid biosynthesis. Functionally, non-heme iron-containing dioxygenase that catalyzes the stereo-specific peroxidation of free and esterified polyunsaturated fatty acids generating a spectrum of bioactive lipid mediators. Catalyzes the peroxidation of arachidonate and linoleate into (8S)-HPETE and (9S)-HPODE respectively. In addition to generate (8S)-HPETE from free arachidonic acid (AA), may produce other HETE isomers from phospholipid-esterified polyunsaturated fatty acids and minor products derived from (8S)-HPETE itself that may include leukotriene A4 and 8,15-diHPETE. With free arachidonate as substrate, has no detectable 15S-lipoxygenase activity and only displays a 8S-lipoxygenase activity. However may have a 15S-lipoxygenase activity with (8S)-HPETE to produce (8S,15S)-diHPETE and when oxidizes directly arachidonic acid esterified to membrane-bound phospholipids to produce a phospholipid-esterified 15-HpETE. May also catalyze (15S)-HPETE peroxidation to produce 8,15-diHPETE. May play a role in keratinocyte differentiation through activation of the peroxisome proliferator activated receptor signaling pathway. This chain is Polyunsaturated fatty acid lipoxygenase ALOX8, found in Mus musculus (Mouse).